A 206-amino-acid polypeptide reads, in one-letter code: Flavin prenyltransferase UbiX (206 aa).

Residues 11-13 (GAS), Ser-37, 103-106 (SMST), and Arg-138 contribute to the FMN site. The dimethylallyl phosphate site is built by Tyr-168 and Arg-184.

This sequence belongs to the UbiX/PAD1 family.

The enzyme catalyses dimethylallyl phosphate + FMNH2 = prenylated FMNH2 + phosphate. Flavin prenyltransferase that catalyzes the synthesis of the prenylated FMN cofactor (prenyl-FMN) for 4-hydroxy-3-polyprenylbenzoic acid decarboxylase UbiD. The prenyltransferase is metal-independent and links a dimethylallyl moiety from dimethylallyl monophosphate (DMAP) to the flavin N5 and C6 atoms of FMN. This is Flavin prenyltransferase UbiX from Synechocystis sp. (strain ATCC 27184 / PCC 6803 / Kazusa).